Reading from the N-terminus, the 156-residue chain is ATP synthase subunit b (156 aa).

A helical membrane pass occupies residues 7–27; the sequence is FFAQMVVFFILWWVVAKFIWP.

The protein belongs to the ATPase B chain family. In terms of assembly, F-type ATPases have 2 components, F(1) - the catalytic core - and F(0) - the membrane proton channel. F(1) has five subunits: alpha(3), beta(3), gamma(1), delta(1), epsilon(1). F(0) has three main subunits: a(1), b(2) and c(10-14). The alpha and beta chains form an alternating ring which encloses part of the gamma chain. F(1) is attached to F(0) by a central stalk formed by the gamma and epsilon chains, while a peripheral stalk is formed by the delta and b chains.

The protein localises to the cell inner membrane. F(1)F(0) ATP synthase produces ATP from ADP in the presence of a proton or sodium gradient. F-type ATPases consist of two structural domains, F(1) containing the extramembraneous catalytic core and F(0) containing the membrane proton channel, linked together by a central stalk and a peripheral stalk. During catalysis, ATP synthesis in the catalytic domain of F(1) is coupled via a rotary mechanism of the central stalk subunits to proton translocation. Functionally, component of the F(0) channel, it forms part of the peripheral stalk, linking F(1) to F(0). The sequence is that of ATP synthase subunit b from Cupriavidus metallidurans (strain ATCC 43123 / DSM 2839 / NBRC 102507 / CH34) (Ralstonia metallidurans).